The sequence spans 218 residues: UPF0598 protein C8orf82 homolog (218 aa).

The protein belongs to the UPF0598 family.

This chain is UPF0598 protein C8orf82 homolog, found in Bos taurus (Bovine).